Here is a 495-residue protein sequence, read N- to C-terminus: N-succinylglutamate 5-semialdehyde dehydrogenase (495 aa).

228 to 233 (GSYATG) lines the NAD(+) pocket. Active-site residues include Glu-251 and Cys-285.

This sequence belongs to the aldehyde dehydrogenase family. AstD subfamily.

It catalyses the reaction N-succinyl-L-glutamate 5-semialdehyde + NAD(+) + H2O = N-succinyl-L-glutamate + NADH + 2 H(+). The protein operates within amino-acid degradation; L-arginine degradation via AST pathway; L-glutamate and succinate from L-arginine: step 4/5. Catalyzes the NAD-dependent reduction of succinylglutamate semialdehyde into succinylglutamate. This Legionella pneumophila (strain Paris) protein is N-succinylglutamate 5-semialdehyde dehydrogenase.